A 337-amino-acid polypeptide reads, in one-letter code: Holliday junction branch migration complex subunit RuvB (337 aa).

The interval 4–184 (ADRLIEPIAS…FGIVQRLEFY (181 aa)) is large ATPase domain (RuvB-L). Residues I23, R24, G65, K68, T69, T70, 131–133 (EDY), R174, Y184, and R221 contribute to the ATP site. T69 is a binding site for Mg(2+). Residues 185-255 (NVADLSTIVS…TAAAALDMLE (71 aa)) form a small ATPAse domain (RuvB-S) region. The segment at 258 to 337 (SEGFDIMDRK…FGITKDQTKD (80 aa)) is head domain (RuvB-H). DNA-binding residues include R294, R313, and R318.

It belongs to the RuvB family. As to quaternary structure, homohexamer. Forms an RuvA(8)-RuvB(12)-Holliday junction (HJ) complex. HJ DNA is sandwiched between 2 RuvA tetramers; dsDNA enters through RuvA and exits via RuvB. An RuvB hexamer assembles on each DNA strand where it exits the tetramer. Each RuvB hexamer is contacted by two RuvA subunits (via domain III) on 2 adjacent RuvB subunits; this complex drives branch migration. In the full resolvosome a probable DNA-RuvA(4)-RuvB(12)-RuvC(2) complex forms which resolves the HJ.

It localises to the cytoplasm. The enzyme catalyses ATP + H2O = ADP + phosphate + H(+). Its function is as follows. The RuvA-RuvB-RuvC complex processes Holliday junction (HJ) DNA during genetic recombination and DNA repair, while the RuvA-RuvB complex plays an important role in the rescue of blocked DNA replication forks via replication fork reversal (RFR). RuvA specifically binds to HJ cruciform DNA, conferring on it an open structure. The RuvB hexamer acts as an ATP-dependent pump, pulling dsDNA into and through the RuvAB complex. RuvB forms 2 homohexamers on either side of HJ DNA bound by 1 or 2 RuvA tetramers; 4 subunits per hexamer contact DNA at a time. Coordinated motions by a converter formed by DNA-disengaged RuvB subunits stimulates ATP hydrolysis and nucleotide exchange. Immobilization of the converter enables RuvB to convert the ATP-contained energy into a lever motion, pulling 2 nucleotides of DNA out of the RuvA tetramer per ATP hydrolyzed, thus driving DNA branch migration. The RuvB motors rotate together with the DNA substrate, which together with the progressing nucleotide cycle form the mechanistic basis for DNA recombination by continuous HJ branch migration. Branch migration allows RuvC to scan DNA until it finds its consensus sequence, where it cleaves and resolves cruciform DNA. This chain is Holliday junction branch migration complex subunit RuvB, found in Colwellia psychrerythraea (strain 34H / ATCC BAA-681) (Vibrio psychroerythus).